Consider the following 404-residue polypeptide: Protrudin (404 aa).

The interval 1–20 (MQTSEREGCGPEVSPSTVPE) is disordered. Topologically, residues 1–66 (MQTSEREGCG…AGDGVRYLLR (66 aa)) are cytoplasmic. Positions 1–92 (MQTSEREGCG…LFLTLNEGAW (92 aa)) are sufficient for homooligomerization. Residues 1 to 205 (MQTSEREGCG…LYLLPLCWVL (205 aa)) are sufficient for localization to endoplasmic reticulum tubular network and for interactions with REEP1, REEP5, ATL1, ATL2, ATL3 and SPAST. Positions 51–64 (LEPLKDAGDGVRYL) are necessary for interaction with RAB11A and function in neurite outgrowth. The helical transmembrane segment at 67 to 87 (WQTPLCSLLTCLGLNVLFLTL) threads the bilayer. Asn-88 is a topological domain (lumenal). A helical transmembrane segment spans residues 89–109 (EGAWYSVGALMISVPALLGYL). At 110–187 (QEGCQARLSE…NPAVSSQFYG (78 aa)) the chain is on the cytoplasmic side. The helical intramembrane region spans 188–208 (ALLGTVCMLYLLPLCWVLALL). Topologically, residues 209-404 (NSTLFLGNVE…CASCNQTLSK (196 aa)) are cytoplasmic. The tract at residues 234–286 (MNPKQEESAFESPPPSDAGGKGALVDCTPAPTPTEDLTPGSVEEAEEAEPDEE) is disordered. Positions 271-354 (TPGSVEEAEE…GCSATFSVLK (84 aa)) are necessary for interaction with KIF5A. Over residues 276–286 (EEAEEAEPDEE) the composition is skewed to acidic residues. The interval 286-292 (EFKDAIE) is necessary for interaction with VAPA. Residues 337 to 403 (TNNYGSCTGC…VCASCNQTLS (67 aa)) form an FYVE-type zinc finger. 8 residues coordinate Zn(2+): Cys-343, Cys-346, Cys-359, Cys-362, Cys-367, Cys-370, Cys-395, and Cys-398.

As to quaternary structure, can form homooligomers (monomers, dimers and tetramers). Interacts with RAB11A (GDP-bound form); regulates RAB11A. Interacts with FKBP8; may negatively regulate ZFYVE27 phosphorylation. Interacts with VAPA (via MSP domain); may regulate ZFYVE27 retention in the endoplasmic reticulum and its function in cell projections formation. Interacts with VAPB (via MSP domain). Interacts with RAB11B (GDP-bound form), REEP1, REEP5, ATL1, ATL2, ATL3, SPAST, SURF4, KIF5A, KIF5B, KIF5C and RTN3. Phosphorylated. Phosphorylation is induced by NGF through the MAPK/ERK pathway and modulates interaction with RAB11A.

It is found in the recycling endosome membrane. The protein resides in the endoplasmic reticulum membrane. Its subcellular location is the cell projection. It localises to the growth cone membrane. In terms of biological role, key regulator of RAB11-dependent vesicular trafficking during neurite extension through polarized membrane transport. Promotes axonal elongation and contributes to the establishment of neuronal cell polarity. Involved in nerve growth factor-induced neurite formation in VAPA-dependent manner. Contributes to both the formation and stabilization of the tubular ER network. Involved in ER morphogenesis by regulating the sheet-to-tubule balance and possibly the density of tubule interconnections. Acts as an adapter protein that facilitates the interaction of KIF5A with VAPA, VAPB, SURF4, RAB11A, RAB11B and RTN3 and the ZFYVE27-KIF5A complex contributes to the transport of these proteins in neurons. Can induce formation of neurite-like membrane protrusions in non-neuronal cells in a KIF5A/B-dependent manner. In Bos taurus (Bovine), this protein is Protrudin (ZFYVE27).